The following is a 1402-amino-acid chain: Defective in tip formation protein A (1402 aa).

4 disordered regions span residues 1–20 (MKDI…PPQI), 37–94 (NVTT…PQIV), 109–133 (NTPS…DNDI), and 210–292 (KQSS…RRLK). 2 tandem repeats follow at residues 12–18 (TTTVAPP) and 40–46 (TTTVQPP). Residues 12 to 92 (TTTVAPPQIN…TTTTTVQPPQ (81 aa)) form a 4 X 7 AA repeat of T-T-T-[IV]-[AQ]-P-P region. The span at 38 to 47 (VTTTTVQPPQ) shows a compositional bias: low complexity. Over residues 48 to 58 (IVSPPSPPSPP) the composition is skewed to pro residues. Low complexity predominate over residues 59-94 (QTTTIAPPTILPTTKTTTTTTTTTTTTTTVQPPQIV). Tandem repeats lie at residues 60–66 (TTTIAPP) and 86–92 (TTVQPPQ). A compositionally biased stretch (low complexity) spans 210–234 (KQSSQSQLQQQLSSQSLQQIQQKSK). Pro residues predominate over residues 235–253 (QPPPQQQQQQQPPPPPIPL). Over residues 254 to 279 (LPQIHQQLKPKQQQEQQQQQEQQQQQ) the composition is skewed to low complexity. Positions 350–383 (QRIKSFIENHKKKKQKYREYQSEKNQQQKSNSKK) form a coiled coil. Disordered regions lie at residues 429–453 (DQQQ…SPMT) and 712–745 (NNNN…NLSN). Residues 430-453 (QQQQQQQQQQSTMTTTSSSSSPMT) show a composition bias toward low complexity.

The protein resides in the cell surface. Its function is as follows. Required for correct organization of the actin cytoskeleton and cytokinesis. Also required for apical sorting of prestalk cells, a prerequisite for formation of the tip at the mound stage and subsequent formation of the fruiting body. May be required for cell adhesion. The chain is Defective in tip formation protein A (dtfA) from Dictyostelium discoideum (Social amoeba).